Reading from the N-terminus, the 453-residue chain is Cholecystokinin receptor (453 aa).

The Extracellular portion of the chain corresponds to 1–64; sequence MESLRSLSNI…ILDRKKPSPS (64 aa). N-linked (GlcNAc...) asparagine glycans are attached at residues Asn9, Asn22, Asn30, Asn35, and Asn39. The chain crosses the membrane as a helical span at residues 65 to 94; it reads DLNLWVRIVMYSVIFLLSVFGNTLIIIVLV. Over 95–104 the chain is Cytoplasmic; sequence MNKRLRTITN. The chain crosses the membrane as a helical span at residues 105–131; sequence SFLLSLALSDLMVAVLCMPFTLIPNLM. Over 132-142 the chain is Extracellular; the sequence is ENFIFGEVICR. Cysteines 141 and 223 form a disulfide. The chain crosses the membrane as a helical span at residues 143–164; the sequence is AAAYFMGLSVSVSTFNLVAISI. Residues 165-184 are Cytoplasmic-facing; that stretch reads ERYSAICNPLKSRVWQTRSH. Residues 185 to 205 traverse the membrane as a helical segment; sequence AYRVIAATWVLSSIIMIPYLV. Residues 206-237 lie on the Extracellular side of the membrane; sequence YNKTVTFPMKDRRVGHQCRLVWPSKQVQQAWY. Residues 238-261 traverse the membrane as a helical segment; it reads VLLLTILFFIPGVVMIVAYGLISR. The Cytoplasmic portion of the chain corresponds to 262–343; the sequence is ELYRGIQFEM…KLMAKKRVIR (82 aa). Residues 344-364 traverse the membrane as a helical segment; that stretch reads MLIVIVAMFFICWMPIFVANT. Residues 365–379 lie on the Extracellular side of the membrane; sequence WKAFDELSAFNTLTG. The helical transmembrane segment at 380-403 threads the bilayer; the sequence is APISFIHLLSYTSACVNPLIYCFM. The S-palmitoyl cysteine moiety is linked to residue Cys401. The Cytoplasmic portion of the chain corresponds to 404 to 453; sequence NKRFRKAFLGTFSSCIKPCRNFRDTDEDIAATGASLSKFSYTTVSSLGPA.

This sequence belongs to the G-protein coupled receptor 1 family. As to expression, brain and stomach.

The protein localises to the cell membrane. Receptor for cholecystokinin. This receptor mediates its action by association with G proteins that activate a phosphatidylinositol-calcium second messenger system. Has high affinity for CCK-8 and low affinities for gastrin-17-I, CCK-4, and unsulfated CCK-8. The sequence is that of Cholecystokinin receptor (cckar) from Xenopus laevis (African clawed frog).